A 129-amino-acid chain; its full sequence is uncharacterized protein (129 aa).

Residues Met33 to Ala50 form a helical membrane-spanning segment.

It is found in the membrane. This is an uncharacterized protein from Saccharomyces cerevisiae (strain ATCC 204508 / S288c) (Baker's yeast).